Consider the following 186-residue polypeptide: Lipid A palmitoyltransferase PagP (186 aa).

The N-terminal stretch at 1 to 25 is a signal peptide; the sequence is MNVSKYVAIFSFVFIQLISVGKVFA. Residues histidine 58, aspartate 101, and serine 102 contribute to the active site.

The protein belongs to the lipid A palmitoyltransferase family. As to quaternary structure, homodimer.

Its subcellular location is the cell outer membrane. The enzyme catalyses lipid A (E. coli) + a 1-hexadecanoyl-2-acyl-sn-glycero-3-phosphocholine = hepta-acyl lipid A (E. coli) + a 2-acyl-sn-glycero-3-phosphocholine. It carries out the reaction lipid IIA + a 1-hexadecanoyl-2-acyl-sn-glycero-3-phosphocholine = lipid IIB + a 2-acyl-sn-glycero-3-phosphocholine. It catalyses the reaction lipid IVA (E. coli) + a 1-hexadecanoyl-2-acyl-sn-glycero-3-phosphocholine = lipid IVB (E. coli) + a 2-acyl-sn-glycero-3-phosphocholine. Transfers a palmitate residue from the sn-1 position of a phospholipid to the N-linked hydroxymyristate on the proximal unit of lipid A or its precursors. The protein is Lipid A palmitoyltransferase PagP of Escherichia coli (strain ATCC 55124 / KO11FL).